A 272-amino-acid polypeptide reads, in one-letter code: Probable proteasome subunit beta type-5 (272 aa).

The propeptide at 1–61 is removed in mature form; sequence MNSIVSKYTQ…KHCLIKMNHG (61 aa). Catalysis depends on T62, which acts as the Nucleophile.

The protein belongs to the peptidase T1B family. The 26S proteasome consists of a 20S proteasome core and two 19S regulatory subunits. The 20S proteasome core is composed of 28 subunits that are arranged in four stacked rings, resulting in a barrel-shaped structure. The two end rings are each formed by seven alpha subunits, and the two central rings are each formed by seven beta subunits. The catalytic chamber with the active sites is on the inside of the barrel.

It is found in the cytoplasm. The protein resides in the nucleus. It catalyses the reaction Cleavage of peptide bonds with very broad specificity.. Its function is as follows. The proteasome is a multicatalytic proteinase complex which is characterized by its ability to cleave peptides with Arg, Phe, Tyr, Leu, and Glu adjacent to the leaving group at neutral or slightly basic pH. The proteasome has an ATP-dependent proteolytic activity. This chain is Probable proteasome subunit beta type-5 (pts1), found in Schizosaccharomyces pombe (strain 972 / ATCC 24843) (Fission yeast).